The primary structure comprises 247 residues: Carboxy-S-adenosyl-L-methionine synthase (247 aa).

S-adenosyl-L-methionine is bound by residues Y40, 65–67, 90–91, 122–123, N137, and R204; these read GCS, DN, and DI.

It belongs to the class I-like SAM-binding methyltransferase superfamily. Cx-SAM synthase family. Homodimer.

It catalyses the reaction prephenate + S-adenosyl-L-methionine = carboxy-S-adenosyl-L-methionine + 3-phenylpyruvate + H2O. In terms of biological role, catalyzes the conversion of S-adenosyl-L-methionine (SAM) to carboxy-S-adenosyl-L-methionine (Cx-SAM). In Pseudomonas syringae pv. tomato (strain ATCC BAA-871 / DC3000), this protein is Carboxy-S-adenosyl-L-methionine synthase.